A 329-amino-acid chain; its full sequence is CDP-6-deoxy-L-threo-D-glycero-4-hexulose-3-dehydrase reductase (329 aa).

Residues 2–93 (SLNVKLHPSG…ELDVNYYPEL (92 aa)) form the 2Fe-2S ferredoxin-type domain. Residues Cys37, Cys42, Cys45, and Cys75 each contribute to the [2Fe-2S] cluster site. Residues 98–197 (KKTYPCKLDS…EGPQGTFFVR (100 aa)) enclose the FAD-binding FR-type domain.

In terms of assembly, monomer.

It functions in the pathway nucleotide-sugar biosynthesis; CDP-ascarylose biosynthesis. The protein operates within bacterial outer membrane biogenesis; lipopolysaccharide biosynthesis. Functionally, participates in the conversion of CDP-6-deoxy-D-glycero-L-threo-4-hexulose to 3,6-dideoxy-D-glycero-D-glycero-4-hexulose together with CDP-6-deoxy-D-glycero-L-threo-4-hexulose-3-dehydrase (E1) in two consecutive steps. The detailed mechanism of E3 is not yet resolved. The protein is CDP-6-deoxy-L-threo-D-glycero-4-hexulose-3-dehydrase reductase (ascD) of Yersinia pseudotuberculosis serotype I (strain IP32953).